The primary structure comprises 87 residues: UPF0250 protein YbeD (87 aa).

This sequence belongs to the UPF0250 family.

The protein is UPF0250 protein YbeD of Shigella boydii serotype 18 (strain CDC 3083-94 / BS512).